A 624-amino-acid chain; its full sequence is Ubiquitin-associated and SH3 domain-containing protein A (624 aa).

Residues 19-60 (RSTPSLLDPLLAMGFPTHTALKALAATGRKTAEAAADWLHGH) enclose the UBA domain. The SH3 domain occupies 238-303 (VHYQTLKALF…PENYTERANE (66 aa)). The phosphatase-like stretch occupies residues 358-624 (RRGILVVRHG…FNWRNWISSN (267 aa)).

In terms of assembly, homodimer or homooligomer. Interacts with CBL. Part of a complex containing CBL and activated EGFR. Interacts with ubiquitin and with mono-ubiquitinated proteins. Interacts with dynamin.

The protein resides in the cytoplasm. Its subcellular location is the nucleus. Functionally, interferes with CBL-mediated down-regulation and degradation of receptor-type tyrosine kinases. Promotes accumulation of activated target receptors, such as T-cell receptors, EGFR and PDGFRB, on the cell surface. May inhibit dynamin-dependent endocytic pathways by functionally sequestering dynamin via its SH3 domain. Exhibits negligible protein tyrosine phosphatase activity at neutral pH. May act as a dominant-negative regulator of UBASH3B-dependent dephosphorylation. The chain is Ubiquitin-associated and SH3 domain-containing protein A (Ubash3a) from Mus musculus (Mouse).